Reading from the N-terminus, the 274-residue chain is Thiamine kinase (274 aa).

Belongs to the thiamine kinase family.

It carries out the reaction thiamine + ATP = thiamine phosphate + ADP + H(+). Its pathway is cofactor biosynthesis; thiamine diphosphate biosynthesis; thiamine phosphate from thiamine: step 1/1. In terms of biological role, catalyzes the ATP-dependent phosphorylation of thiamine to thiamine phosphate. Is involved in thiamine salvage. The chain is Thiamine kinase from Escherichia coli O6:K15:H31 (strain 536 / UPEC).